We begin with the raw amino-acid sequence, 340 residues long: Phosphate acyltransferase (340 aa).

Residues 285-340 (WRQSGRPARHRGQEPRRHRQPRFWLCHRRGRRRSPRQRNRTHPGTGQPPAGCAGAR) form a disordered region. Positions 300-325 (RRHRQPRFWLCHRRGRRRSPRQRNRT) are enriched in basic residues.

The protein belongs to the PlsX family. As to quaternary structure, homodimer. Probably interacts with PlsY.

The protein localises to the cytoplasm. It carries out the reaction a fatty acyl-[ACP] + phosphate = an acyl phosphate + holo-[ACP]. It functions in the pathway lipid metabolism; phospholipid metabolism. Catalyzes the reversible formation of acyl-phosphate (acyl-PO(4)) from acyl-[acyl-carrier-protein] (acyl-ACP). This enzyme utilizes acyl-ACP as fatty acyl donor, but not acyl-CoA. This chain is Phosphate acyltransferase, found in Laribacter hongkongensis (strain HLHK9).